Reading from the N-terminus, the 463-residue chain is ATP synthase subunit beta (463 aa).

152–159 (GGAGVGKT) is an ATP binding site.

It belongs to the ATPase alpha/beta chains family. In terms of assembly, F-type ATPases have 2 components, CF(1) - the catalytic core - and CF(0) - the membrane proton channel. CF(1) has five subunits: alpha(3), beta(3), gamma(1), delta(1), epsilon(1). CF(0) has three main subunits: a(1), b(2) and c(9-12). The alpha and beta chains form an alternating ring which encloses part of the gamma chain. CF(1) is attached to CF(0) by a central stalk formed by the gamma and epsilon chains, while a peripheral stalk is formed by the delta and b chains.

It is found in the cell membrane. It carries out the reaction ATP + H2O + 4 H(+)(in) = ADP + phosphate + 5 H(+)(out). Functionally, produces ATP from ADP in the presence of a proton gradient across the membrane. The catalytic sites are hosted primarily by the beta subunits. The polypeptide is ATP synthase subunit beta (Clostridium botulinum (strain Alaska E43 / Type E3)).